Here is a 154-residue protein sequence, read N- to C-terminus: Protein X (154 aa).

The segment at 68 to 117 (PCALRFTSARSMETTVNAHQVLPKVLHKRTLGLSAMSTTDLEAYFKDCLF) is mitochondrial targeting sequence.

It belongs to the orthohepadnavirus protein X family. May form homodimer. May interact with host CEBPA, CFLAR, CREB1, DDB1, E4F1, HBXIP, HSPD1/HSP60, NFKBIA, POLR2E and SMAD4. Interacts with host SMC5-SMC6 complex and induces its degradation. Interacts with host TRPC4AP; leading to prevent ubiquitination of TRPC4AP. Interacts with host PLSCR1; this interaction promotes ubiquitination and degradation of HBx and impairs HBx-mediated cell proliferation. In terms of processing, a fraction may be phosphorylated in insect cells and HepG2 cells, a human hepatoblastoma cell line. Phosphorylated in vitro by host protein kinase C or mitogen-activated protein kinase. N-acetylated in insect cells.

The protein localises to the host cytoplasm. It localises to the host nucleus. The protein resides in the host mitochondrion. Its function is as follows. Multifunctional protein that plays a role in silencing host antiviral defenses and promoting viral transcription. Does not seem to be essential for HBV infection. May be directly involved in development of cirrhosis and liver cancer (hepatocellular carcinoma). Most of cytosolic activities involve modulation of cytosolic calcium. The effect on apoptosis is controversial depending on the cell types in which the studies have been conducted. May induce apoptosis by localizing in mitochondria and causing loss of mitochondrial membrane potential. May also modulate apoptosis by binding host CFLAR, a key regulator of the death-inducing signaling complex (DISC). Promotes viral transcription by using the host E3 ubiquitin ligase DDB1 to target the SMC5-SMC6 complex to proteasomal degradation. This host complex would otherwise bind to viral episomal DNA, and prevents its transcription. Moderately stimulates transcription of many different viral and cellular transcription elements. Promoters and enhancers stimulated by HBx contain DNA binding sites for NF-kappa-B, AP-1, AP-2, c-EBP, ATF/CREB, or the calcium-activated factor NF-AT. The polypeptide is Protein X (Homo sapiens (Human)).